Consider the following 255-residue polypeptide: DNA repair protein RecO (255 aa).

The protein belongs to the RecO family.

Functionally, involved in DNA repair and RecF pathway recombination. The chain is DNA repair protein RecO from Listeria monocytogenes serotype 4b (strain CLIP80459).